A 419-amino-acid polypeptide reads, in one-letter code: 2-amino-3-ketobutyrate coenzyme A ligase, mitochondrial (419 aa).

Residues 1-21 constitute a mitochondrion transit peptide; sequence MWAGRVLHAALSRAPRESRAQ. At lysine 45 the chain carries N6-acetyllysine; alternate. An N6-succinyllysine; alternate modification is found at lysine 45. 134-135 lines the pyridoxal 5'-phosphate pocket; it reads CF. Position 159 (histidine 159) interacts with substrate. The residue at position 187 (lysine 187) is an N6-acetyllysine; alternate. At lysine 187 the chain carries N6-succinyllysine; alternate. Residues serine 206, 231-234, 262-265, and 295-296 each bind pyridoxal 5'-phosphate; these read DESH, TLGK, and SN. Residue lysine 265 is modified to N6-(pyridoxal phosphate)lysine. Lysine 326 and lysine 368 each carry N6-succinyllysine. The residue at position 383 (lysine 383) is an N6-acetyllysine; alternate. Lysine 383 bears the N6-succinyllysine; alternate mark. Arginine 389 lines the substrate pocket.

It belongs to the class-II pyridoxal-phosphate-dependent aminotransferase family. Pyridoxal 5'-phosphate serves as cofactor.

It localises to the mitochondrion. The protein localises to the nucleus. It carries out the reaction glycine + acetyl-CoA = (2S)-2-amino-3-oxobutanoate + CoA. It functions in the pathway amino-acid degradation; L-threonine degradation via oxydo-reductase pathway; glycine from L-threonine: step 2/2. Pyridoxal phosphate (PLP) dependent enzyme, which catalyzes the cleavage of 2-amino-3-oxobutanoate to glycine and acetyl-CoA. Catalyzes the second reaction step on the main metabolic degradation pathway for L-threonine. The sequence is that of 2-amino-3-ketobutyrate coenzyme A ligase, mitochondrial (GCAT) from Bos taurus (Bovine).